The sequence spans 701 residues: Polyribonucleotide nucleotidyltransferase (701 aa).

Mg(2+)-binding residues include D487 and D493. The KH domain occupies 554-613 (PTMIAMKIDTDKIRDVIGKGGATIRAICEETKASIDIEDDGSIKIFGETKEAADAAKQRI). The region spanning 623–691 (GKIYVGKVER…NRGRIKLSIK (69 aa)) is the S1 motif domain.

This sequence belongs to the polyribonucleotide nucleotidyltransferase family. As to quaternary structure, component of the RNA degradosome, which is a multiprotein complex involved in RNA processing and mRNA degradation. The cofactor is Mg(2+).

It is found in the cytoplasm. The enzyme catalyses RNA(n+1) + phosphate = RNA(n) + a ribonucleoside 5'-diphosphate. Functionally, involved in mRNA degradation. Catalyzes the phosphorolysis of single-stranded polyribonucleotides processively in the 3'- to 5'-direction. The polypeptide is Polyribonucleotide nucleotidyltransferase (Pseudomonas putida (Arthrobacter siderocapsulatus)).